We begin with the raw amino-acid sequence, 59 residues long: Large ribosomal subunit protein uL30 (59 aa).

The protein belongs to the universal ribosomal protein uL30 family. In terms of assembly, part of the 50S ribosomal subunit.

The sequence is that of Large ribosomal subunit protein uL30 from Syntrophotalea carbinolica (strain DSM 2380 / NBRC 103641 / GraBd1) (Pelobacter carbinolicus).